A 289-amino-acid chain; its full sequence is Shikimate dehydrogenase (NADP(+)) (289 aa).

Residues 22-24 and Thr69 contribute to the shikimate site; that span reads SRS. The active-site Proton acceptor is the Lys73. NADP(+) is bound at residue Glu85. Shikimate-binding residues include Asn94 and Asp109. NADP(+)-binding positions include 134 to 138, 158 to 163, and Ile226; these read GAGGA and NRTLSR. Residue Tyr228 participates in shikimate binding. Gly249 contributes to the NADP(+) binding site.

The protein belongs to the shikimate dehydrogenase family. Homodimer.

It carries out the reaction shikimate + NADP(+) = 3-dehydroshikimate + NADPH + H(+). It participates in metabolic intermediate biosynthesis; chorismate biosynthesis; chorismate from D-erythrose 4-phosphate and phosphoenolpyruvate: step 4/7. In terms of biological role, involved in the biosynthesis of the chorismate, which leads to the biosynthesis of aromatic amino acids. Catalyzes the reversible NADPH linked reduction of 3-dehydroshikimate (DHSA) to yield shikimate (SA). In Brucella canis (strain ATCC 23365 / NCTC 10854 / RM-666), this protein is Shikimate dehydrogenase (NADP(+)).